The following is a 360-amino-acid chain: Probable dual-specificity RNA methyltransferase RlmN (360 aa).

The active-site Proton acceptor is the E97. Positions 103 to 330 constitute a Radical SAM core domain; the sequence is DGDRLTFCIS…TAVRRSRGLD (228 aa). A disulfide bridge links C110 with C335. [4Fe-4S] cluster-binding residues include C117, C121, and C124. Residues 165-166, S197, 220-222, and H292 contribute to the S-adenosyl-L-methionine site; these read GE and SIH. C335 serves as the catalytic S-methylcysteine intermediate.

It belongs to the radical SAM superfamily. RlmN family. Requires [4Fe-4S] cluster as cofactor.

It is found in the cytoplasm. The catalysed reaction is adenosine(2503) in 23S rRNA + 2 reduced [2Fe-2S]-[ferredoxin] + 2 S-adenosyl-L-methionine = 2-methyladenosine(2503) in 23S rRNA + 5'-deoxyadenosine + L-methionine + 2 oxidized [2Fe-2S]-[ferredoxin] + S-adenosyl-L-homocysteine. It catalyses the reaction adenosine(37) in tRNA + 2 reduced [2Fe-2S]-[ferredoxin] + 2 S-adenosyl-L-methionine = 2-methyladenosine(37) in tRNA + 5'-deoxyadenosine + L-methionine + 2 oxidized [2Fe-2S]-[ferredoxin] + S-adenosyl-L-homocysteine. Functionally, specifically methylates position 2 of adenine 2503 in 23S rRNA and position 2 of adenine 37 in tRNAs. In Gemmatimonas aurantiaca (strain DSM 14586 / JCM 11422 / NBRC 100505 / T-27), this protein is Probable dual-specificity RNA methyltransferase RlmN.